The sequence spans 199 residues: Transmembrane protein 9B (199 aa).

The N-terminal stretch at 1–34 is a signal peptide; sequence MASLWCGNLLRLGSGLSMSCLALSVLLLAQLTGA. N-linked (GlcNAc...) asparagine glycosylation is present at Asn61. Residues 106–126 form a helical membrane-spanning segment; that stretch reads IIIYLSILGLLLLYMVYLTLV. Residues Ser143 and Ser190 each carry the phosphoserine modification.

It belongs to the TMEM9 family. N-glycosylated.

It localises to the lysosome membrane. The protein localises to the early endosome membrane. Functionally, enhances production of pro-inflammatory cytokines induced by TNF, IL1B, and TLR ligands. Has a role in TNF activation of both the NF-kappaB and MAPK pathways. This chain is Transmembrane protein 9B (Tmem9b), found in Mus musculus (Mouse).